Reading from the N-terminus, the 171-residue chain is tRNA-splicing endonuclease (171 aa).

Catalysis depends on residues tyrosine 110, histidine 117, and lysine 148.

Belongs to the tRNA-intron endonuclease family. Archaeal short subfamily. In terms of assembly, homotetramer; although the tetramer contains four active sites, only two participate in the cleavage. Therefore, it should be considered as a dimer of dimers.

It catalyses the reaction pretRNA = a 3'-half-tRNA molecule with a 5'-OH end + a 5'-half-tRNA molecule with a 2',3'-cyclic phosphate end + an intron with a 2',3'-cyclic phosphate and a 5'-hydroxyl terminus.. Endonuclease that removes tRNA introns. Cleaves pre-tRNA at the 5'- and 3'-splice sites to release the intron. The products are an intron and two tRNA half-molecules bearing 2',3' cyclic phosphate and 5'-OH termini. Recognizes a pseudosymmetric substrate in which 2 bulged loops of 3 bases are separated by a stem of 4 bp. The polypeptide is tRNA-splicing endonuclease (Thermococcus onnurineus (strain NA1)).